An 89-amino-acid chain; its full sequence is Acylphosphatase (89 aa).

The 86-residue stretch at 3–88 (TLHLQIEGRV…GEYSGFEKRS (86 aa)) folds into the Acylphosphatase-like domain. Catalysis depends on residues Arg18 and Asn36.

Belongs to the acylphosphatase family.

It carries out the reaction an acyl phosphate + H2O = a carboxylate + phosphate + H(+). In Thiobacillus denitrificans (strain ATCC 25259 / T1), this protein is Acylphosphatase (acyP).